The following is a 755-amino-acid chain: Primary amine oxidase (755 aa).

The signal sequence occupies residues 1–30 (MANGLKFSPRKTALALAVAVVCAWQSPVFA). Substrate is bound by residues 411–422 (YLDSGDYGMGTL) and 493–498 (VGNYDY). The active-site Proton acceptor is Asp-413. Residue Tyr-496 is the Schiff-base intermediate with substrate; via topaquinone of the active site. Position 496 is a 2',4',5'-topaquinone (Tyr-496). 2 residues coordinate Cu cation: His-554 and His-556. Residues Asp-563, Leu-564, Asp-565, Glu-603, Tyr-697, Asp-700, Glu-702, and Asp-708 each coordinate Ca(2+). Asp-563 contacts Mn(2+). A Mn(2+)-binding site is contributed by Asp-565. Position 708 (Asp-708) interacts with Mn(2+). Position 719 (His-719) interacts with Cu cation.

Belongs to the copper/topaquinone oxidase family. As to quaternary structure, homodimer. Cu cation serves as cofactor. The cofactor is Zn(2+). Requires Ca(2+) as cofactor. It depends on L-topaquinone as a cofactor. Mn(2+) is required as a cofactor. In terms of processing, topaquinone (TPQ) is generated by copper-dependent autoxidation of a specific tyrosyl residue.

The protein localises to the periplasm. It carries out the reaction a primary methyl amine + O2 + H2O = an aldehyde + H2O2 + NH4(+). Active on tyramine, tryptamine, beta-phenethylamine and dopamine. The sequence is that of Primary amine oxidase (maoA) from Klebsiella aerogenes (Enterobacter aerogenes).